The sequence spans 292 residues: Inositol oxygenase (292 aa).

Substrate is bound by residues Arg-33 and 88–90; that span reads DES. Fe cation-binding residues include His-101, His-128, and Asp-129. Residues Lys-132 and 149 to 150 each bind substrate; that span reads GD. Fe cation contacts are provided by His-201, His-227, and Asp-260. Residue 227-228 participates in substrate binding; it reads HS.

Belongs to the myo-inositol oxygenase family. It depends on Fe cation as a cofactor.

It is found in the cytoplasm. It carries out the reaction myo-inositol + O2 = D-glucuronate + H2O + H(+). The protein operates within polyol metabolism; myo-inositol degradation into D-glucuronate; D-glucuronate from myo-inositol: step 1/1. This chain is Inositol oxygenase (miox), found in Dictyostelium discoideum (Social amoeba).